A 357-amino-acid chain; its full sequence is Acyl-coenzyme A diphosphatase NUDT19 (357 aa).

The Nudix hydrolase domain maps to 10–242 (AATVMLAAGW…IWLAPPQFYE (233 aa)). Residues 72 to 94 (PRFGLGPEPPRQPPFPGLSHGDA) are disordered. Positions 78–87 (PEPPRQPPFP) are enriched in pro residues. The Nudix box motif lies at 97–118 (AALPDDVALRICAIRETFEEAG). 2 residues coordinate Mg(2+): Glu112 and Glu116. Lys300 carries the N6-succinyllysine modification. The short motif at 355 to 357 (AHL) is the Microbody targeting signal element.

The protein belongs to the Nudix hydrolase family. Monomer. Mg(2+) serves as cofactor. The cofactor is Mn(2+).

The protein resides in the peroxisome. The catalysed reaction is an acyl-CoA + H2O = an acyl-4'-phosphopantetheine + adenosine 3',5'-bisphosphate + 2 H(+). It catalyses the reaction CoA + H2O = (R)-4'-phosphopantetheine + adenosine 3',5'-bisphosphate + 2 H(+). It carries out the reaction hexanoyl-CoA + H2O = hexanoyl-4'-phosphopantetheine + adenosine 3',5'-bisphosphate + 2 H(+). The enzyme catalyses octanoyl-CoA + H2O = S-octanoyl-4'-phosphopantetheine + adenosine 3',5'-bisphosphate + 2 H(+). The catalysed reaction is butanoyl-CoA + H2O = S-butanoyl-4'-phosphopantetheine + adenosine 3',5'-bisphosphate + 2 H(+). It catalyses the reaction propanoyl-CoA + H2O = propanoyl-4'-phosphopantetheine + adenosine 3',5'-bisphosphate + 2 H(+). It carries out the reaction malonyl-CoA + H2O = malonyl-4'-phosphopantetheine + adenosine 3',5'-bisphosphate + 2 H(+). The enzyme catalyses succinyl-CoA + H2O = succinyl-4'-phosphopantetheine + adenosine 3',5'-bisphosphate + 2 H(+). The catalysed reaction is choloyl-CoA + H2O = S-choloyl-4'-phosphopantetheine + adenosine 3',5'-bisphosphate + 2 H(+). It catalyses the reaction 4,8-dimethylnonanoyl-CoA + H2O = S-(4,8-dimethylnonanoyl)-4'-phosphopantetheine + adenosine 3',5'-bisphosphate + 2 H(+). It carries out the reaction (9Z,12Z,15Z)-octadecatrienoyl-CoA + H2O = S-(9Z,12Z,15Z-octadecatrienoyl)-4'-phosphopantetheine + adenosine 3',5'-bisphosphate + 2 H(+). The enzyme catalyses (9Z,12Z)-octadecadienoyl-CoA + H2O = S-(9Z,12Z-octadecadienoyl)-4'-phosphopantetheine + adenosine 3',5'-bisphosphate + 2 H(+). The catalysed reaction is (9Z)-hexadecenoyl-CoA + H2O = S-(9Z-hexadecenoyl)-4'-phosphopantetheine + adenosine 3',5'-bisphosphate + 2 H(+). It catalyses the reaction (9Z)-tetradecenoyl-CoA + H2O = S-(9Z-tetradecenoyl)-4'-phosphopantetheine + adenosine 3',5'-bisphosphate + 2 H(+). It carries out the reaction (6Z)-octenoyl-CoA + H2O = S-(6Z-octenoyl)-4'-phosphopantetheine + adenosine 3',5'-bisphosphate + 2 H(+). The enzyme catalyses hexadecanoyl-CoA + H2O = S-hexadecanoyl-4'-phosphopantetheine + adenosine 3',5'-bisphosphate + 2 H(+). The catalysed reaction is tetradecanoyl-CoA + H2O = tetradecanoyl-4'-phosphopantetheine + adenosine 3',5'-bisphosphate + 2 H(+). It catalyses the reaction dodecanoyl-CoA + H2O = S-dodecanoyl-4'-phosphopantetheine + adenosine 3',5'-bisphosphate + 2 H(+). It carries out the reaction a 5'-end CoA-ribonucleoside in mRNA + H2O = a 5'-end phospho-adenosine-phospho-ribonucleoside in mRNA + (R)-4'-phosphopantetheine + 2 H(+). Fatty acyl-coenzyme A (CoA) diphosphatase that hydrolyzes fatty acyl-CoA to yield acyl-4'-phosphopantetheine and adenosine 3',5'-bisphosphate. Mediates the hydrolysis of a wide range of CoA esters, including choloyl-CoA and branched-chain fatty-acyl-CoA esters and at low substrate concentrations medium and long-chain fatty-acyl-CoA esters are the primary substrates. Highest activity seen with medium-chain acyl-CoA esters and higher rates of activity seen with the unsaturated acyl-CoA esters compared with the saturated esters. Exhibits decapping activity towards dpCoA-capped RNAs in vitro. The chain is Acyl-coenzyme A diphosphatase NUDT19 (Nudt19) from Mus caroli (Ryukyu mouse).